A 563-amino-acid polypeptide reads, in one-letter code: Arginine--tRNA ligase (563 aa).

A 'HIGH' region motif is present at residues 121 to 131 (PNIAKPFSIGH).

It belongs to the class-I aminoacyl-tRNA synthetase family. As to quaternary structure, monomer.

Its subcellular location is the cytoplasm. It catalyses the reaction tRNA(Arg) + L-arginine + ATP = L-arginyl-tRNA(Arg) + AMP + diphosphate. The chain is Arginine--tRNA ligase from Streptococcus agalactiae serotype Ia (strain ATCC 27591 / A909 / CDC SS700).